Reading from the N-terminus, the 81-residue chain is Small ribosomal subunit protein bS16c (81 aa).

It belongs to the bacterial ribosomal protein bS16 family.

Its subcellular location is the plastid. It localises to the chloroplast. This Emiliania huxleyi (Coccolithophore) protein is Small ribosomal subunit protein bS16c.